The chain runs to 262 residues: Orotidine 5'-phosphate decarboxylase (262 aa).

Substrate is bound by residues Asp35, 57–59, 89–98, Tyr215, and Arg233; these read KTH and DRKFADIGNT. Lys91 serves as the catalytic Proton donor.

Belongs to the OMP decarboxylase family.

It carries out the reaction orotidine 5'-phosphate + H(+) = UMP + CO2. It participates in pyrimidine metabolism; UMP biosynthesis via de novo pathway; UMP from orotate: step 2/2. This is Orotidine 5'-phosphate decarboxylase (URA3) from Pichia kudriavzevii (Yeast).